The following is a 363-amino-acid chain: Fructose-bisphosphate aldolase 2 (363 aa).

Ser61 lines the D-glyceraldehyde 3-phosphate pocket. Asp109 functions as the Proton donor in the catalytic mechanism. Zn(2+)-binding residues include His110, Asp144, Glu174, and His226. Gly227 lines the dihydroxyacetone phosphate pocket. Residue His264 participates in Zn(2+) binding. 265–267 contributes to the dihydroxyacetone phosphate binding site; sequence GGS.

Belongs to the class II fructose-bisphosphate aldolase family. As to quaternary structure, homodimer. The cofactor is Zn(2+).

The catalysed reaction is beta-D-fructose 1,6-bisphosphate = D-glyceraldehyde 3-phosphate + dihydroxyacetone phosphate. It functions in the pathway carbohydrate degradation; glycolysis; D-glyceraldehyde 3-phosphate and glycerone phosphate from D-glucose: step 4/4. Its function is as follows. Catalyzes the aldol condensation of dihydroxyacetone phosphate (DHAP or glycerone-phosphate) with glyceraldehyde 3-phosphate (G3P) to form fructose 1,6-bisphosphate (FBP) in gluconeogenesis and the reverse reaction in glycolysis. The sequence is that of Fructose-bisphosphate aldolase 2 (FBA2) from Paracoccidioides lutzii (strain ATCC MYA-826 / Pb01) (Paracoccidioides brasiliensis).